The sequence spans 250 residues: 1-(5-phosphoribosyl)-5-[(5-phosphoribosylamino)methylideneamino] imidazole-4-carboxamide isomerase (250 aa).

The active-site Proton acceptor is Asp-8. Residue Asp-129 is the Proton donor of the active site.

It belongs to the HisA/HisF family.

Its subcellular location is the cytoplasm. The catalysed reaction is 1-(5-phospho-beta-D-ribosyl)-5-[(5-phospho-beta-D-ribosylamino)methylideneamino]imidazole-4-carboxamide = 5-[(5-phospho-1-deoxy-D-ribulos-1-ylimino)methylamino]-1-(5-phospho-beta-D-ribosyl)imidazole-4-carboxamide. It participates in amino-acid biosynthesis; L-histidine biosynthesis; L-histidine from 5-phospho-alpha-D-ribose 1-diphosphate: step 4/9. This Desulfovibrio desulfuricans (strain ATCC 27774 / DSM 6949 / MB) protein is 1-(5-phosphoribosyl)-5-[(5-phosphoribosylamino)methylideneamino] imidazole-4-carboxamide isomerase.